Consider the following 90-residue polypeptide: Small ribosomal subunit protein uS15c (90 aa).

The protein belongs to the universal ribosomal protein uS15 family. Part of the 30S ribosomal subunit.

Its subcellular location is the plastid. The protein localises to the chloroplast. This is Small ribosomal subunit protein uS15c (rps15) from Daucus carota (Wild carrot).